We begin with the raw amino-acid sequence, 597 residues long: Arginine--tRNA ligase (597 aa).

The short motif at 125–135 (PNTNKPLHLGH) is the 'HIGH' region element.

Belongs to the class-I aminoacyl-tRNA synthetase family. Monomer.

The protein resides in the cytoplasm. It carries out the reaction tRNA(Arg) + L-arginine + ATP = L-arginyl-tRNA(Arg) + AMP + diphosphate. The sequence is that of Arginine--tRNA ligase from Porphyromonas gingivalis (strain ATCC 33277 / DSM 20709 / CIP 103683 / JCM 12257 / NCTC 11834 / 2561).